The following is a 419-amino-acid chain: UDP-N-acetylglucosamine 1-carboxyvinyltransferase (419 aa).

22–23 contributes to the phosphoenolpyruvate binding site; that stretch reads KN. R95 provides a ligand contact to UDP-N-acetyl-alpha-D-glucosamine. The active-site Proton donor is the C119. Residue C119 is modified to 2-(S-cysteinyl)pyruvic acid O-phosphothioketal. UDP-N-acetyl-alpha-D-glucosamine is bound by residues 164–167, D308, and I330; that span reads KVSV.

This sequence belongs to the EPSP synthase family. MurA subfamily.

It is found in the cytoplasm. It carries out the reaction phosphoenolpyruvate + UDP-N-acetyl-alpha-D-glucosamine = UDP-N-acetyl-3-O-(1-carboxyvinyl)-alpha-D-glucosamine + phosphate. It participates in cell wall biogenesis; peptidoglycan biosynthesis. In terms of biological role, cell wall formation. Adds enolpyruvyl to UDP-N-acetylglucosamine. This Rickettsia canadensis (strain McKiel) protein is UDP-N-acetylglucosamine 1-carboxyvinyltransferase.